We begin with the raw amino-acid sequence, 523 residues long: Thiamine pathway transporter THI73 (523 aa).

The Cytoplasmic segment spans residues 1–79 (MKNMSQRSMD…LSPKVLRKVD (79 aa)). A helical transmembrane segment spans residues 80–100 (LFILPFLCCTYLLMFLDKALL). The Extracellular portion of the chain corresponds to 101–118 (NYAASMGIKDHLKGNEFS). A helical transmembrane segment spans residues 119–139 (NLGTIFSAAYIFMEPVVTYLI). Residues 140 to 141 (QK) lie on the Cytoplasmic side of the membrane. Residues 142–162 (FPISKILGTFITVWGIVLACH) form a helical membrane-spanning segment. The Extracellular segment spans residues 163–176 (AACKTYASLMVVRT). Residues 177–197 (LLGLFESSSAVGCIAISGMYY) form a helical membrane-spanning segment. The Cytoplasmic portion of the chain corresponds to 198–207 (TKSEQSARIG). A helical membrane pass occupies residues 208–228 (FWATQAGTGYIVGGLISFGFL). The Extracellular segment spans residues 229–239 (HYHGTAFTSWQ). A helical membrane pass occupies residues 240–260 (IMFLVVGLVTVAFGVLTFLYL). The Cytoplasmic segment spans residues 261–312 (PDNVTNAWFLNKEEKIQVVEHIRANQTGLETKKFKKQQVKELFLHDKFTWPM). A helical membrane pass occupies residues 313-333 (LLLTACSQISTGAIGTFSVTI). Residues 334-345 (TGTFGFDKYETA) are Extracellular-facing. A helical membrane pass occupies residues 346 to 366 (LLQLPIGAITAMIILITTQML). The Cytoplasmic segment spans residues 367–371 (SRWGH). Residues 372–392 (ITLITTSMYIPAIIGCIVLIS) form a helical membrane-spanning segment. At 393 to 400 (LPLSHKIG) the chain is on the extracellular side. The helical transmembrane segment at 401-421 (NLFSLYLLYSGSCVITNIYIW) threads the bilayer. Over 422-432 (NSCNTSGYTKR) the chain is Cytoplasmic. A helical membrane pass occupies residues 433–452 (VFRNAITMIVYNVSCIIAPQ). The Extracellular portion of the chain corresponds to 453–466 (MFRAYSAPRYIPAK). The helical transmembrane segment at 467 to 487 (IALLVTQCVCVPLQLYIGYIC) threads the bilayer. At 488–523 (KKENEKRDKEQEGQERKKYQFLDLTDIENRNFRYIY) the chain is on the cytoplasmic side.

This sequence belongs to the major facilitator superfamily. Allantoate permease family.

The protein resides in the endoplasmic reticulum membrane. It localises to the cell membrane. Transports either thiamine or, rather, a related metabolite involved in the thiamine biosynthesis pathway. In Saccharomyces cerevisiae (strain ATCC 204508 / S288c) (Baker's yeast), this protein is Thiamine pathway transporter THI73 (THI73).